Here is a 234-residue protein sequence, read N- to C-terminus: Ribonuclease 3 (234 aa).

Residues 4-133 (LLDLEHKLNY…ILGAVYIDSN (130 aa)) enclose the RNase III domain. A Mg(2+)-binding site is contributed by Glu-46. Asp-50 is a catalytic residue. Mg(2+) contacts are provided by Asp-119 and Glu-122. Glu-122 is a catalytic residue. One can recognise a DRBM domain in the interval 160-228 (DFKSILQEYV…AKALCIKLGV (69 aa)).

This sequence belongs to the ribonuclease III family. In terms of assembly, homodimer. Mg(2+) serves as cofactor.

It is found in the cytoplasm. It catalyses the reaction Endonucleolytic cleavage to 5'-phosphomonoester.. Functionally, digests double-stranded RNA. Involved in the processing of primary rRNA transcript to yield the immediate precursors to the large and small rRNAs (23S and 16S). Processes some mRNAs, and tRNAs when they are encoded in the rRNA operon. Processes pre-crRNA and tracrRNA of type II CRISPR loci if present in the organism. The polypeptide is Ribonuclease 3 (Fusobacterium nucleatum subsp. nucleatum (strain ATCC 25586 / DSM 15643 / BCRC 10681 / CIP 101130 / JCM 8532 / KCTC 2640 / LMG 13131 / VPI 4355)).